We begin with the raw amino-acid sequence, 306 residues long: Curved DNA-binding protein (306 aa).

The region spanning 5-69 is the J domain; it reads DYYAIMGVKP…QRRAEYDQMW (65 aa).

It localises to the cytoplasm. It is found in the nucleoid. Functionally, DNA-binding protein that preferentially recognizes a curved DNA sequence. It is probably a functional analog of DnaJ; displays overlapping activities with DnaJ, but functions under different conditions, probably acting as a molecular chaperone in an adaptive response to environmental stresses other than heat shock. Lacks autonomous chaperone activity; binds native substrates and targets them for recognition by DnaK. Its activity is inhibited by the binding of CbpM. The protein is Curved DNA-binding protein of Escherichia coli O127:H6 (strain E2348/69 / EPEC).